Consider the following 328-residue polypeptide: DNA-directed RNA polymerase subunit alpha (328 aa).

Residues 1–231 form an alpha N-terminal domain (alpha-NTD) region; that stretch reads MIYQMQMPAK…EHVTFFANFS (231 aa). The interval 247–328 is alpha C-terminal domain (alpha-CTD); that stretch reads DEFETMRRLL…MDITRYQMKG (82 aa).

It belongs to the RNA polymerase alpha chain family. As to quaternary structure, homodimer. The RNAP catalytic core consists of 2 alpha, 1 beta, 1 beta' and 1 omega subunit. When a sigma factor is associated with the core the holoenzyme is formed, which can initiate transcription.

It carries out the reaction RNA(n) + a ribonucleoside 5'-triphosphate = RNA(n+1) + diphosphate. DNA-dependent RNA polymerase catalyzes the transcription of DNA into RNA using the four ribonucleoside triphosphates as substrates. The chain is DNA-directed RNA polymerase subunit alpha from Chlorobium luteolum (strain DSM 273 / BCRC 81028 / 2530) (Pelodictyon luteolum).